The sequence spans 306 residues: Porphobilinogen deaminase (306 aa).

An S-(dipyrrolylmethanemethyl)cysteine modification is found at Cys-239.

Belongs to the HMBS family. In terms of assembly, monomer. The cofactor is dipyrromethane.

It catalyses the reaction 4 porphobilinogen + H2O = hydroxymethylbilane + 4 NH4(+). Its pathway is porphyrin-containing compound metabolism; protoporphyrin-IX biosynthesis; coproporphyrinogen-III from 5-aminolevulinate: step 2/4. In terms of biological role, tetrapolymerization of the monopyrrole PBG into the hydroxymethylbilane pre-uroporphyrinogen in several discrete steps. This is Porphobilinogen deaminase from Helicobacter acinonychis (strain Sheeba).